The primary structure comprises 89 residues: Small ribosomal subunit protein uS15 (89 aa).

It belongs to the universal ribosomal protein uS15 family. As to quaternary structure, part of the 30S ribosomal subunit. Forms a bridge to the 50S subunit in the 70S ribosome, contacting the 23S rRNA.

Functionally, one of the primary rRNA binding proteins, it binds directly to 16S rRNA where it helps nucleate assembly of the platform of the 30S subunit by binding and bridging several RNA helices of the 16S rRNA. Its function is as follows. Forms an intersubunit bridge (bridge B4) with the 23S rRNA of the 50S subunit in the ribosome. The polypeptide is Small ribosomal subunit protein uS15 (Corynebacterium diphtheriae (strain ATCC 700971 / NCTC 13129 / Biotype gravis)).